The primary structure comprises 323 residues: MIRSVVRGIGSALPKRVMKNTDFEGIIETSDEWIVQRTGIRERHIAGDDETTVSLGTAAARAAIENAGLQPTDIDLVLLATSTPNHTFPASAVEIQRELGITKGFAFDMQAVCSGFIYAITTADLYIRGGMAKRVLVIGAETFSRILDWNDRTTCVLFGDGAGALVLEAAEGNGLTSDRGVLAANLRSDGNHKEKLFVDGGPSTTQTVGHLRMEGREVFKHAVGMITDVIEASFEETGLTAEDIDWFVPHQANKRIIDASAKKLNIAEGKVVITVDRHGNTSAASVPLALATAVADGRIKKGDLVLLEAMGGGFTWGAVLLRW.

Active-site residues include C113 and H250. The segment at 251-255 (QANKR) is ACP-binding. Residue N280 is part of the active site.

It belongs to the thiolase-like superfamily. FabH family. As to quaternary structure, homodimer.

The protein localises to the cytoplasm. The catalysed reaction is malonyl-[ACP] + acetyl-CoA + H(+) = 3-oxobutanoyl-[ACP] + CO2 + CoA. It participates in lipid metabolism; fatty acid biosynthesis. Functionally, catalyzes the condensation reaction of fatty acid synthesis by the addition to an acyl acceptor of two carbons from malonyl-ACP. Catalyzes the first condensation reaction which initiates fatty acid synthesis and may therefore play a role in governing the total rate of fatty acid production. Possesses both acetoacetyl-ACP synthase and acetyl transacylase activities. Its substrate specificity determines the biosynthesis of branched-chain and/or straight-chain of fatty acids. In Brucella anthropi (strain ATCC 49188 / DSM 6882 / CCUG 24695 / JCM 21032 / LMG 3331 / NBRC 15819 / NCTC 12168 / Alc 37) (Ochrobactrum anthropi), this protein is Beta-ketoacyl-[acyl-carrier-protein] synthase III.